Reading from the N-terminus, the 227-residue chain is Cytochrome c oxidase subunit 2 (227 aa).

The Mitochondrial intermembrane segment spans residues 1 to 14; the sequence is MPYPMQLGFQDATS. Residues 15–45 traverse the membrane as a helical segment; that stretch reads PIMEELTYFHDHTLMIVFLISSLVLYIIILM. At 46-59 the chain is on the mitochondrial matrix side; that stretch reads LTTKLTHTSTMDAQ. The chain crosses the membrane as a helical span at residues 60–87; sequence EVETIWTILPAVILVLIALPSLRILYMM. Residues 88–227 lie on the Mitochondrial intermembrane side of the membrane; it reads DEIYNPYLTI…YFEKWSSMMQ (140 aa). His161, Cys196, Glu198, Cys200, His204, and Met207 together coordinate Cu cation. Glu198 contributes to the Mg(2+) binding site. Position 218 is a phosphotyrosine (Tyr218).

Belongs to the cytochrome c oxidase subunit 2 family. In terms of assembly, component of the cytochrome c oxidase (complex IV, CIV), a multisubunit enzyme composed of 14 subunits. The complex is composed of a catalytic core of 3 subunits MT-CO1, MT-CO2 and MT-CO3, encoded in the mitochondrial DNA, and 11 supernumerary subunits COX4I, COX5A, COX5B, COX6A, COX6B, COX6C, COX7A, COX7B, COX7C, COX8 and NDUFA4, which are encoded in the nuclear genome. The complex exists as a monomer or a dimer and forms supercomplexes (SCs) in the inner mitochondrial membrane with NADH-ubiquinone oxidoreductase (complex I, CI) and ubiquinol-cytochrome c oxidoreductase (cytochrome b-c1 complex, complex III, CIII), resulting in different assemblies (supercomplex SCI(1)III(2)IV(1) and megacomplex MCI(2)III(2)IV(2)). Found in a complex with TMEM177, COA6, COX18, COX20, SCO1 and SCO2. Interacts with TMEM177 in a COX20-dependent manner. Interacts with COX20. Interacts with COX16. Requires Cu cation as cofactor.

The protein resides in the mitochondrion inner membrane. It carries out the reaction 4 Fe(II)-[cytochrome c] + O2 + 8 H(+)(in) = 4 Fe(III)-[cytochrome c] + 2 H2O + 4 H(+)(out). In terms of biological role, component of the cytochrome c oxidase, the last enzyme in the mitochondrial electron transport chain which drives oxidative phosphorylation. The respiratory chain contains 3 multisubunit complexes succinate dehydrogenase (complex II, CII), ubiquinol-cytochrome c oxidoreductase (cytochrome b-c1 complex, complex III, CIII) and cytochrome c oxidase (complex IV, CIV), that cooperate to transfer electrons derived from NADH and succinate to molecular oxygen, creating an electrochemical gradient over the inner membrane that drives transmembrane transport and the ATP synthase. Cytochrome c oxidase is the component of the respiratory chain that catalyzes the reduction of oxygen to water. Electrons originating from reduced cytochrome c in the intermembrane space (IMS) are transferred via the dinuclear copper A center (CU(A)) of subunit 2 and heme A of subunit 1 to the active site in subunit 1, a binuclear center (BNC) formed by heme A3 and copper B (CU(B)). The BNC reduces molecular oxygen to 2 water molecules using 4 electrons from cytochrome c in the IMS and 4 protons from the mitochondrial matrix. This Osphranter robustus (Wallaroo) protein is Cytochrome c oxidase subunit 2 (MT-CO2).